Consider the following 938-residue polypeptide: Chaperone protein ClpD1, chloroplastic (938 aa).

The N-terminal 83 residues, 1–83, are a transit peptide targeting the chloroplast; that stretch reads MEVCCCSTSS…FERFTERAVK (83 aa). Repeat stretches follow at residues 84-145 and 159-224; these read AVVL…TPGA and FSGS…LQAE. The Clp R domain maps to 84 to 224; that stretch reads AVVLSQREAK…SVALTRLQAE (141 aa). Positions 234–255 are disordered; sequence GASSFKVPKKSPAGAGRSAFSK. Residues 266–519 are i; that stretch reads LDQFCLDLTT…RMESFNRKKE (254 aa). Residues 311–318 and 660–667 each bind ATP; these read GEAGVGKT and GPTGVGKT. Positions 586-777 are II; sequence VGTEEIARVA…LIVMTSNIGS (192 aa).

It belongs to the ClpA/ClpB family. ClpD subfamily. In terms of tissue distribution, expressed in stems, culms and leaves.

Its subcellular location is the plastid. It is found in the chloroplast. In terms of biological role, molecular chaperone that may function in heat stress response. May interact with a ClpP-like protease involved in degradation of denatured proteins in the chloroplast. Chaperone involved in response to abiotic stresses. Plays a positive role during dehydration and salt stress. This chain is Chaperone protein ClpD1, chloroplastic, found in Oryza sativa subsp. japonica (Rice).